The chain runs to 519 residues: DNA damage-binding protein CMR1 (519 aa).

A disordered region spans residues 35–92 (AEAGLGPTGKSRAAASSKPRVKKPAPKKIKQEDIAPRRTSSRLKGIEADSEKAKRKAE). The span at 53–62 (PRVKKPAPKK) shows a compositional bias: basic residues. Residues 78-92 (KGIEADSEKAKRKAE) show a composition bias toward basic and acidic residues. 6 WD repeats span residues 240-280 (PHTR…AVEV), 287-327 (NEDQ…DQAE), 331-371 (LSEK…GKGD), 380-420 (EHES…EWAT), 442-485 (GRWV…LAQL), and 488-519 (DGIT…CLWM).

This sequence belongs to the WD repeat DDB2/WDR76 family.

In terms of biological role, DNA-binding protein that binds to both single- and double-stranded DNA. Binds preferentially to UV-damaged DNA. May be involved in DNA-metabolic processes. This Phaeosphaeria nodorum (strain SN15 / ATCC MYA-4574 / FGSC 10173) (Glume blotch fungus) protein is DNA damage-binding protein CMR1.